The primary structure comprises 378 residues: Chaperone protein DnaJ (378 aa).

The J domain occupies 5–69; sequence DYYEVLGVSK…NKRANYDQFG (65 aa). A CR-type zinc finger spans residues 135 to 217; sequence GSEKEISIRK…CHGKGTENKN (83 aa). Positions 148, 151, 165, 168, 191, 194, 205, and 208 each coordinate Zn(2+). CXXCXGXG motif repeat units follow at residues 148–155, 165–172, 191–198, and 205–212; these read CHTCDGEG, CHYCNGSG, CPVCSGSG, and CPTCHGKG.

Belongs to the DnaJ family. Homodimer. Requires Zn(2+) as cofactor.

It localises to the cytoplasm. In terms of biological role, participates actively in the response to hyperosmotic and heat shock by preventing the aggregation of stress-denatured proteins and by disaggregating proteins, also in an autonomous, DnaK-independent fashion. Unfolded proteins bind initially to DnaJ; upon interaction with the DnaJ-bound protein, DnaK hydrolyzes its bound ATP, resulting in the formation of a stable complex. GrpE releases ADP from DnaK; ATP binding to DnaK triggers the release of the substrate protein, thus completing the reaction cycle. Several rounds of ATP-dependent interactions between DnaJ, DnaK and GrpE are required for fully efficient folding. Also involved, together with DnaK and GrpE, in the DNA replication of plasmids through activation of initiation proteins. The polypeptide is Chaperone protein DnaJ (Staphylococcus saprophyticus subsp. saprophyticus (strain ATCC 15305 / DSM 20229 / NCIMB 8711 / NCTC 7292 / S-41)).